The sequence spans 777 residues: Phosphoribosylformylglycinamidine synthase subunit PurL (777 aa).

Residue histidine 50 is part of the active site. Tyrosine 53 and lysine 92 together coordinate ATP. Glutamate 94 is a Mg(2+) binding site. Residues 95–98 and arginine 117 contribute to the substrate site; that span reads SHNH. Histidine 96 functions as the Proton acceptor in the catalytic mechanism. Aspartate 118 contacts Mg(2+). Glutamine 241 is a binding site for substrate. Mg(2+) is bound at residue aspartate 269. 313–315 serves as a coordination point for substrate; that stretch reads ESQ. ATP contacts are provided by aspartate 516 and glycine 553. Asparagine 554 is a Mg(2+) binding site. Serine 556 provides a ligand contact to substrate.

This sequence belongs to the FGAMS family. In terms of assembly, monomer. Part of the FGAM synthase complex composed of 1 PurL, 1 PurQ and 2 PurS subunits.

The protein localises to the cytoplasm. It catalyses the reaction N(2)-formyl-N(1)-(5-phospho-beta-D-ribosyl)glycinamide + L-glutamine + ATP + H2O = 2-formamido-N(1)-(5-O-phospho-beta-D-ribosyl)acetamidine + L-glutamate + ADP + phosphate + H(+). Its pathway is purine metabolism; IMP biosynthesis via de novo pathway; 5-amino-1-(5-phospho-D-ribosyl)imidazole from N(2)-formyl-N(1)-(5-phospho-D-ribosyl)glycinamide: step 1/2. Functionally, part of the phosphoribosylformylglycinamidine synthase complex involved in the purines biosynthetic pathway. Catalyzes the ATP-dependent conversion of formylglycinamide ribonucleotide (FGAR) and glutamine to yield formylglycinamidine ribonucleotide (FGAM) and glutamate. The FGAM synthase complex is composed of three subunits. PurQ produces an ammonia molecule by converting glutamine to glutamate. PurL transfers the ammonia molecule to FGAR to form FGAM in an ATP-dependent manner. PurS interacts with PurQ and PurL and is thought to assist in the transfer of the ammonia molecule from PurQ to PurL. This chain is Phosphoribosylformylglycinamidine synthase subunit PurL, found in Synechococcus elongatus (strain ATCC 33912 / PCC 7942 / FACHB-805) (Anacystis nidulans R2).